We begin with the raw amino-acid sequence, 363 residues long: Probable L-tyrosine/L-aspartate decarboxylase (363 aa).

Lys208 is subject to N6-(pyridoxal phosphate)lysine.

It belongs to the group II decarboxylase family. MfnA subfamily. Pyridoxal 5'-phosphate is required as a cofactor.

The enzyme catalyses L-tyrosine + H(+) = tyramine + CO2. It catalyses the reaction L-aspartate + H(+) = beta-alanine + CO2. Its pathway is cofactor biosynthesis; methanofuran biosynthesis. The protein operates within cofactor biosynthesis; coenzyme A biosynthesis. Functionally, catalyzes the decarboxylation of L-tyrosine to produce tyramine for methanofuran biosynthesis. Can also catalyze the decarboxylation of L-aspartate to produce beta-alanine for coenzyme A (CoA) biosynthesis. This is Probable L-tyrosine/L-aspartate decarboxylase from Methanothermobacter thermautotrophicus (strain ATCC 29096 / DSM 1053 / JCM 10044 / NBRC 100330 / Delta H) (Methanobacterium thermoautotrophicum).